The primary structure comprises 535 residues: GMP synthase [glutamine-hydrolyzing] (535 aa).

The 191-residue stretch at 21-211 (LIVILDFGSQ…VYHICDCEPT (191 aa)) folds into the Glutamine amidotransferase type-1 domain. Residue cysteine 98 is the Nucleophile of the active site. Residues histidine 185 and glutamate 187 contribute to the active site. The region spanning 212–410 (WTTAAFVEEA…LGLPEEIVQR (199 aa)) is the GMPS ATP-PPase domain. 239-245 (SGGVDSS) provides a ligand contact to ATP.

As to quaternary structure, homodimer.

It catalyses the reaction XMP + L-glutamine + ATP + H2O = GMP + L-glutamate + AMP + diphosphate + 2 H(+). It functions in the pathway purine metabolism; GMP biosynthesis; GMP from XMP (L-Gln route): step 1/1. Catalyzes the synthesis of GMP from XMP. This Thermosynechococcus vestitus (strain NIES-2133 / IAM M-273 / BP-1) protein is GMP synthase [glutamine-hydrolyzing].